The chain runs to 361 residues: 3-dehydroquinate synthase (361 aa).

NAD(+) is bound by residues 72–77 (SGEKEK), 130–131 (TT), Lys-142, and Lys-151. Zn(2+) contacts are provided by Glu-184, His-247, and His-264.

The protein belongs to the sugar phosphate cyclases superfamily. Dehydroquinate synthase family. Co(2+) serves as cofactor. It depends on Zn(2+) as a cofactor. Requires NAD(+) as cofactor.

The protein localises to the cytoplasm. The enzyme catalyses 7-phospho-2-dehydro-3-deoxy-D-arabino-heptonate = 3-dehydroquinate + phosphate. It participates in metabolic intermediate biosynthesis; chorismate biosynthesis; chorismate from D-erythrose 4-phosphate and phosphoenolpyruvate: step 2/7. Catalyzes the conversion of 3-deoxy-D-arabino-heptulosonate 7-phosphate (DAHP) to dehydroquinate (DHQ). The polypeptide is 3-dehydroquinate synthase (Bacillus mycoides (strain KBAB4) (Bacillus weihenstephanensis)).